The following is a 475-amino-acid chain: tRNA-dihydrouridine(16/17) synthase [NAD(P)(+)]-like (475 aa).

FMN-binding positions include 23–25 and Gln-79; that span reads PMV. The Proton donor role is filled by Cys-108. Residues Lys-147, His-175, 208–210, and 232–233 contribute to the FMN site; these read NGN and AE. Residues 343 to 388 are disordered; sequence GPREGSKENSGGRSKRALEEEEGSMEGLSKNKLKKQLRNPHKTFDP. Over residues 373-383 the composition is skewed to basic residues; that stretch reads NKLKKQLRNPH.

The protein belongs to the Dus family. Dus1 subfamily. It depends on FMN as a cofactor.

Its subcellular location is the cytoplasm. The protein resides in the nucleus. It carries out the reaction 5,6-dihydrouridine(16) in tRNA + NADP(+) = uridine(16) in tRNA + NADPH + H(+). The catalysed reaction is 5,6-dihydrouridine(16) in tRNA + NAD(+) = uridine(16) in tRNA + NADH + H(+). It catalyses the reaction 5,6-dihydrouridine(17) in tRNA + NAD(+) = uridine(17) in tRNA + NADH + H(+). The enzyme catalyses 5,6-dihydrouridine(17) in tRNA + NADP(+) = uridine(17) in tRNA + NADPH + H(+). Functionally, catalyzes the synthesis of dihydrouridine, a modified base found in the D-loop of most tRNAs. Specifically modifies U16 and U17 in cytoplasmic tRNAs. Affects the level of some mature tRNA and thereby the total cellular translation. This chain is tRNA-dihydrouridine(16/17) synthase [NAD(P)(+)]-like (Dus1l), found in Mus musculus (Mouse).